Reading from the N-terminus, the 216-residue chain is Pyrophosphatase PpaX (216 aa).

Asp12 functions as the Nucleophile in the catalytic mechanism.

Belongs to the HAD-like hydrolase superfamily. PpaX family. The cofactor is Mg(2+).

The enzyme catalyses diphosphate + H2O = 2 phosphate + H(+). In terms of biological role, hydrolyzes pyrophosphate formed during P-Ser-HPr dephosphorylation by HPrK/P. Might play a role in controlling the intracellular pyrophosphate pool. In Bacillus velezensis (strain DSM 23117 / BGSC 10A6 / LMG 26770 / FZB42) (Bacillus amyloliquefaciens subsp. plantarum), this protein is Pyrophosphatase PpaX.